Reading from the N-terminus, the 285-residue chain is 1-acyl-sn-glycerol-3-phosphate acyltransferase alpha (285 aa).

The first 28 residues, 1-28 (MELWPGAWTALLLLLLLLLSTLWFCSSS), serve as a signal peptide directing secretion. Topologically, residues 29 to 34 (AKYFFK) are lumenal. The chain crosses the membrane as a helical span at residues 35–55 (MAFYNGWILFLAILAIPVCAV). Residues 56-124 (RGRNVENMKI…PDRCVPIAKR (69 aa)) lie on the Cytoplasmic side of the membrane. The HXXXXD motif motif lies at 101–106 (HQSSLD). A helical transmembrane segment spans residues 125–145 (ELLWAGSAGLACWLAGIIFID). Residues 146-189 (RKRTGDAISVMSEVAQTLLTQDVRVWVFPEGTRNHNGSMLPFKR) lie on the Lumenal side of the membrane. The short motif at 175-178 (EGTR) is the EGTR motif element.

Belongs to the 1-acyl-sn-glycerol-3-phosphate acyltransferase family. Widely expressed.

Its subcellular location is the endoplasmic reticulum membrane. The catalysed reaction is a 1-acyl-sn-glycero-3-phosphate + an acyl-CoA = a 1,2-diacyl-sn-glycero-3-phosphate + CoA. It carries out the reaction 1-(9Z-octadecenoyl)-sn-glycero-3-phosphate + (9Z)-octadecenoyl-CoA = 1,2-di-(9Z-octadecenoyl)-sn-glycero-3-phosphate + CoA. The enzyme catalyses 1-(9Z-octadecenoyl)-sn-glycero-3-phosphate + hexadecanoyl-CoA = 1-(9Z)-octadecenoyl-2-hexadecanoyl-sn-glycero-3-phosphate + CoA. It catalyses the reaction heptadecanoyl-CoA + 1-(9Z-octadecenoyl)-sn-glycero-3-phosphate = 1-(9Z)-octadecenoyl-2-heptadecanoyl-sn-glycero-3-phosphate + CoA. The catalysed reaction is 1-(9Z-octadecenoyl)-sn-glycero-3-phosphate + octadecanoyl-CoA = 1-(9Z-octadecenoyl)-2-octadecanoyl-sn-glycero-3-phosphate + CoA. It carries out the reaction 1-(9Z-octadecenoyl)-sn-glycero-3-phosphate + (9Z,12Z)-octadecadienoyl-CoA = 1-(9Z)-octadecenoyl-2-(9Z,12Z)-octadecadienoyl-sn-glycero-3-phosphate + CoA. The enzyme catalyses 1-(9Z-octadecenoyl)-sn-glycero-3-phosphate + tetradecanoyl-CoA = 1-(9Z)-octadecenoyl-2-tetradecanoyl-sn-glycero-3-phosphate + CoA. It catalyses the reaction pentadecanoyl-CoA + 1-(9Z-octadecenoyl)-sn-glycero-3-phosphate = 1-(9Z)-octadecenoyl-2-pentadecanoyl-sn-glycero-3-phosphate + CoA. The catalysed reaction is 1-hexadecanoyl-sn-glycero-3-phosphate + (9Z)-octadecenoyl-CoA = 1-hexadecanoyl-2-(9Z-octadecenoyl)-sn-glycero-3-phosphate + CoA. It carries out the reaction 1-(9Z,12Z,15Z)-octadecatrienoyl-sn-glycero-3-phosphate + (9Z)-octadecenoyl-CoA = 1-(9Z,12Z,15Z)-octadecatrienoyl-2-(9Z)-octadecenoyl-sn-glycero-3-phosphate + CoA. The enzyme catalyses 1-(6Z,9Z,12Z-octadecatrienoyl)-sn-glycero-3-phosphate + (9Z)-octadecenoyl-CoA = (6Z,9Z,12Z)-octadecatrienoyl-2-(9Z)-octadecenoyl-sn-glycero-3-phosphate + CoA. It catalyses the reaction 1-eicosanoyl-sn-glycero-3-phosphate + (9Z)-octadecenoyl-CoA = 1-eicosanoyl-2-(9Z)-octadecenoyl-sn-glycero-3-phosphate + CoA. The catalysed reaction is 1-tetradecanoyl-sn-glycerol 3-phosphate + (9Z)-octadecenoyl-CoA = 1-tetradecanoyl-2-(9Z)-octadecenoyl-sn-glycero-3-phosphate + CoA. It carries out the reaction 1-(9Z-octadecenoyl)-sn-glycero-3-phosphate + (5Z,8Z,11Z,14Z)-eicosatetraenoyl-CoA = 1-(9Z)-octadecenoyl-2-(5Z,8Z,11Z,14Z)-eicosatetraenoyl-sn-glycero-3-phosphate + CoA. The enzyme catalyses 1-(9Z-octadecenoyl)-sn-glycero-3-phosphate + dodecanoyl-CoA = 1-(9Z)-octadecenoyl-2-dodecanoyl-sn-glycero-3-phosphate + CoA. It catalyses the reaction (6Z)-octadecenoyl-CoA + 1-(9Z-octadecenoyl)-sn-glycero-3-phosphate = 1-(9Z)-octadecenoyl-2-(6Z)-octadecenoyl-sn-glycero-3-phosphate + CoA. The catalysed reaction is (11Z)-octadecenoyl-CoA + 1-(9Z-octadecenoyl)-sn-glycero-3-phosphate = 1-(9Z)-octadecenoyl-2-(11Z)-octadecenoyl-sn-glycero-3-phosphate + CoA. It carries out the reaction (9Z)-hexadecenoyl-CoA + 1-(9Z-octadecenoyl)-sn-glycero-3-phosphate = 1-(9Z-octadecenoyl)-2-(9Z-hexadecenoyl)-sn-glycero-3-phosphate + CoA. It participates in phospholipid metabolism; CDP-diacylglycerol biosynthesis; CDP-diacylglycerol from sn-glycerol 3-phosphate: step 2/3. In terms of biological role, converts 1-acyl-sn-glycerol-3-phosphate (lysophosphatidic acid or LPA) into 1,2-diacyl-sn-glycerol-3-phosphate (phosphatidic acid or PA) by incorporating an acyl moiety at the sn-2 position of the glycerol backbone. The chain is 1-acyl-sn-glycerol-3-phosphate acyltransferase alpha (Agpat1) from Mus musculus (Mouse).